The chain runs to 156 residues: Small ribosomal subunit protein uS7 (156 aa).

Belongs to the universal ribosomal protein uS7 family. In terms of assembly, part of the 30S ribosomal subunit. Contacts proteins S9 and S11.

Functionally, one of the primary rRNA binding proteins, it binds directly to 16S rRNA where it nucleates assembly of the head domain of the 30S subunit. Is located at the subunit interface close to the decoding center, probably blocks exit of the E-site tRNA. This chain is Small ribosomal subunit protein uS7, found in Brachyspira hyodysenteriae (strain ATCC 49526 / WA1).